Reading from the N-terminus, the 540-residue chain is Cytochrome bc1 complex cytochrome b subunit (540 aa).

The chain crosses the membrane as a helical span at residues 40-60; it reads EIALYSFIILLLTGVYLTLFF. His105 and His119 together coordinate heme. Transmembrane regions (helical) follow at residues 109-129, 137-157, and 169-189; these read ALTF…TGAF, WIIG…GYSL, and IMSA…WLIF. The heme site is built by His206 and His221. 5 helical membrane-spanning segments follow: residues 207–227, 259–279, 325–345, 371–391, and 408–428; these read VLII…LVWY, FGLV…INAI, AFWV…YPFI, LGVM…NDLF, and IGLI…CLGL.

Belongs to the cytochrome b family. In terms of assembly, the cytochrome bc1 complex is composed of a cytochrome b (QcrB), the Rieske protein iron-sulfur (QcrA) and a diheme cytochrome c (QcrC) subunit. It depends on heme as a cofactor.

The protein localises to the cell membrane. The enzyme catalyses a quinol + 2 Fe(III)-[cytochrome c](out) = a quinone + 2 Fe(II)-[cytochrome c](out) + 2 H(+)(out). Functionally, cytochrome b subunit of the cytochrome bc1 complex, an essential component of the respiratory electron transport chain required for ATP synthesis. The bc1 complex catalyzes the oxidation of menaquinol and the reduction of cytochrome c in the respiratory chain. The bc1 complex operates through a Q-cycle mechanism that couples electron transfer to generation of the proton gradient that drives ATP synthesis. The polypeptide is Cytochrome bc1 complex cytochrome b subunit (qcrB) (Corynebacterium diphtheriae (strain ATCC 700971 / NCTC 13129 / Biotype gravis)).